The following is a 228-amino-acid chain: Protein-L-isoaspartate O-methyltransferase (228 aa).

The active site involves serine 74.

The protein belongs to the methyltransferase superfamily. L-isoaspartyl/D-aspartyl protein methyltransferase family.

It localises to the cytoplasm. The catalysed reaction is [protein]-L-isoaspartate + S-adenosyl-L-methionine = [protein]-L-isoaspartate alpha-methyl ester + S-adenosyl-L-homocysteine. Catalyzes the methyl esterification of L-isoaspartyl residues in peptides and proteins that result from spontaneous decomposition of normal L-aspartyl and L-asparaginyl residues. It plays a role in the repair and/or degradation of damaged proteins. This is Protein-L-isoaspartate O-methyltransferase from Methylorubrum extorquens (strain PA1) (Methylobacterium extorquens).